The following is a 111-amino-acid chain: Cytochrome c6-like (111 aa).

Positions methionine 1–alanine 25 are cleaved as a signal peptide. Residues cysteine 39, cysteine 42, histidine 43, and methionine 83 each coordinate heme c.

It belongs to the cytochrome c family. PetJ subfamily. Post-translationally, binds 1 heme c group covalently per subunit.

It localises to the cellular thylakoid lumen. This chain is Cytochrome c6-like, found in Nostoc sp. (strain PCC 7120 / SAG 25.82 / UTEX 2576).